Here is a 67-residue protein sequence, read N- to C-terminus: DNA-directed RNA polymerase subunit omega (67 aa).

It belongs to the RNA polymerase subunit omega family. The RNAP catalytic core consists of 2 alpha, 1 beta, 1 beta' and 1 omega subunit. When a sigma factor is associated with the core the holoenzyme is formed, which can initiate transcription.

It carries out the reaction RNA(n) + a ribonucleoside 5'-triphosphate = RNA(n+1) + diphosphate. Its function is as follows. Promotes RNA polymerase assembly. Latches the N- and C-terminal regions of the beta' subunit thereby facilitating its interaction with the beta and alpha subunits. The chain is DNA-directed RNA polymerase subunit omega from Dictyoglomus turgidum (strain DSM 6724 / Z-1310).